Consider the following 233-residue polypeptide: Glucosamine-6-phosphate deaminase (233 aa).

Aspartate 62 functions as the Proton acceptor; for enolization step in the catalytic mechanism. The active-site For ring-opening step is asparagine 128. The Proton acceptor; for ring-opening step role is filled by histidine 130. The For ring-opening step role is filled by glutamate 135.

Belongs to the glucosamine/galactosamine-6-phosphate isomerase family. NagB subfamily.

The enzyme catalyses alpha-D-glucosamine 6-phosphate + H2O = beta-D-fructose 6-phosphate + NH4(+). The protein operates within amino-sugar metabolism; N-acetylneuraminate degradation; D-fructose 6-phosphate from N-acetylneuraminate: step 5/5. Catalyzes the reversible isomerization-deamination of glucosamine 6-phosphate (GlcN6P) to form fructose 6-phosphate (Fru6P) and ammonium ion. This chain is Glucosamine-6-phosphate deaminase, found in Streptococcus pneumoniae serotype 4 (strain ATCC BAA-334 / TIGR4).